Consider the following 378-residue polypeptide: 1-acyl-sn-glycerol-3-phosphate acyltransferase delta (378 aa).

The helical transmembrane segment at 11–31 (FLCHLIFCYVFIVSGLIINTI) threads the bilayer. The HXXXXD motif motif lies at 96-101 (HKFEID). The next 3 helical transmembrane spans lie at 125–145 (ELAYVPIIGWMWYFTEMVFCT), 307–327 (TLVNWLFWASMLLYPFFRFVI), and 338–358 (LASFVLVFFVASMGVRWMIGV).

This sequence belongs to the 1-acyl-sn-glycerol-3-phosphate acyltransferase family.

The protein localises to the endoplasmic reticulum membrane. The catalysed reaction is a 1-acyl-sn-glycero-3-phosphate + an acyl-CoA = a 1,2-diacyl-sn-glycero-3-phosphate + CoA. It catalyses the reaction (4Z,7Z,10Z,13Z,16Z,19Z)-docosahexaenoyl-CoA + 1-hexadecanoyl-sn-glycero-3-phosphate = 1-hexadecanoyl-2-(4Z,7Z,10Z,13Z,16Z,19Z-docosahexaenoyl)-sn-glycero-3-phosphate + CoA. It carries out the reaction 1-octadecanoyl-sn-glycero-3-phosphate + (9Z,12Z)-octadecadienoyl-CoA = 1-octadecanoyl-2-(9Z,12Z-octadecadienoyl)-sn-glycero-3-phosphate + CoA. The enzyme catalyses 1-octadecanoyl-sn-glycero-3-phosphate + (4Z,7Z,10Z,13Z,16Z,19Z)-docosahexaenoyl-CoA = 1-octadecanoyl-2-(4Z,7Z,10Z,13Z,16Z,19Z-docosahexaenoyl)-sn-glycero-3-phosphate + CoA. The catalysed reaction is (4Z,7Z,10Z,13Z,16Z,19Z)-docosahexaenoyl-CoA + 1-(9Z-octadecenoyl)-sn-glycero-3-phosphate = 1-(9Z-octadecenoyl)-2-(4Z,7Z,10Z,13Z,16Z,19Z-docosahexaenoyl)-sn-glycero-3-phosphate + CoA. It participates in phospholipid metabolism; CDP-diacylglycerol biosynthesis; CDP-diacylglycerol from sn-glycerol 3-phosphate: step 2/3. Converts 1-acyl-sn-glycerol-3-phosphate (lysophosphatidic acid or LPA) into 1,2-diacyl-sn-glycerol-3-phosphate (phosphatidic acid or PA) by incorporating an acyl moiety at the sn-2 position of the glycerol backbone. Exhibits high acyl-CoA specificity for polyunsaturated fatty acyl-CoA, especially docosahexaenoyl-CoA (22:6-CoA, DHA-CoA). This chain is 1-acyl-sn-glycerol-3-phosphate acyltransferase delta (AGPAT4), found in Bos taurus (Bovine).